A 429-amino-acid polypeptide reads, in one-letter code: Methylenetetrahydrofolate--tRNA-(uracil-5-)-methyltransferase TrmFO (429 aa).

Gly-7 to Gly-12 contributes to the FAD binding site.

The protein belongs to the MnmG family. TrmFO subfamily. The cofactor is FAD.

Its subcellular location is the cytoplasm. The catalysed reaction is uridine(54) in tRNA + (6R)-5,10-methylene-5,6,7,8-tetrahydrofolate + NADH + H(+) = 5-methyluridine(54) in tRNA + (6S)-5,6,7,8-tetrahydrofolate + NAD(+). The enzyme catalyses uridine(54) in tRNA + (6R)-5,10-methylene-5,6,7,8-tetrahydrofolate + NADPH + H(+) = 5-methyluridine(54) in tRNA + (6S)-5,6,7,8-tetrahydrofolate + NADP(+). Functionally, catalyzes the folate-dependent formation of 5-methyl-uridine at position 54 (M-5-U54) in all tRNAs. The polypeptide is Methylenetetrahydrofolate--tRNA-(uracil-5-)-methyltransferase TrmFO (Thermosipho africanus (strain TCF52B)).